The sequence spans 108 residues: uncharacterized protein (108 aa).

This is an uncharacterized protein from Mycoplasma pneumoniae (strain ATCC 29342 / M129 / Subtype 1) (Mycoplasmoides pneumoniae).